A 1035-amino-acid polypeptide reads, in one-letter code: Valine--tRNA ligase (1035 aa).

The 'HIGH' region motif lies at 45–55; it reads PNVTGALHLGH. Positions 253–281 form a coiled coil; sequence EKLSDANEKEAVDLNKQIEALQKRREERL. Lysine 619 contributes to the ATP binding site. A coiled-coil region spans residues 967 to 1035; it reads DVEAELARLE…QDILKLQSKK (69 aa).

Belongs to the class-I aminoacyl-tRNA synthetase family. ValS type 1 subfamily. In terms of assembly, monomer.

It is found in the cytoplasm. It catalyses the reaction tRNA(Val) + L-valine + ATP = L-valyl-tRNA(Val) + AMP + diphosphate. Catalyzes the attachment of valine to tRNA(Val). As ValRS can inadvertently accommodate and process structurally similar amino acids such as threonine, to avoid such errors, it has a 'posttransfer' editing activity that hydrolyzes mischarged Thr-tRNA(Val) in a tRNA-dependent manner. This is Valine--tRNA ligase from Rhodopirellula baltica (strain DSM 10527 / NCIMB 13988 / SH1).